Here is a 1479-residue protein sequence, read N- to C-terminus: Putative receptor-type tyrosine-protein phosphatase mosPTP-1 (1479 aa).

The N-terminal stretch at 1 to 28 (MKPRLLTTVTTWLALVLPVVYLSRPCQA) is a signal peptide. Residues 29–365 (LPTVNFTANY…RQSYNDYNLA (337 aa)) lie on the Extracellular side of the membrane. N-linked (GlcNAc...) asparagine glycosylation is found at asparagine 33, asparagine 40, asparagine 146, asparagine 182, asparagine 248, asparagine 294, and asparagine 306. Fibronectin type-III domains lie at 143–242 (KPLN…AGPS) and 243–346 (APKV…VQLN). A helical membrane pass occupies residues 366-386 (VMIGILICCFGLLFIVLTILL). At 387-1479 (WKKCFHAAYY…AKLRAVVRVE (1093 aa)) the chain is on the cytoplasmic side. 2 Tyrosine-protein phosphatase domains span residues 452–717 (FSKE…LVEA) and 740–992 (IDSQ…LSYM). Cysteine 658 (phosphocysteine intermediate) is an active-site residue.

It belongs to the protein-tyrosine phosphatase family. Receptor class subfamily. Interacts with C-type lectin mosGCTL-1. Interacts with C-type lectin mosGCTL-7.

It is found in the cell membrane. The catalysed reaction is O-phospho-L-tyrosyl-[protein] + H2O = L-tyrosyl-[protein] + phosphate. Its function is as follows. Putative protein tyrosine-protein phosphatase. In terms of biological role, (Microbial infection) Facilitates West Nile virus infection in mosquitoes. In Culex quinquefasciatus (Southern house mosquito), this protein is Putative receptor-type tyrosine-protein phosphatase mosPTP-1.